Consider the following 204-residue polypeptide: Transcription initiation factor TFIID subunit 11b (204 aa).

The disordered stretch occupies residues Pro-38 to Asp-60. Over residues Ala-42–Glu-58 the composition is skewed to acidic residues. Residues Phe-106–Pro-195 enclose the Histone-fold domain.

This sequence belongs to the TAF11 family. Component of the TFIID complex. TFIID is composed of TATA binding protein (TBP) and a number of TBP-associated factors (TAFs) whose MWs range from 14-217 kDa. In terms of tissue distribution, expressed in roots, leaves and inflorescences.

The protein localises to the nucleus. TAFs are components of the transcription factor IID (TFIID) complex that is essential for mediating regulation of RNA polymerase transcription. This is Transcription initiation factor TFIID subunit 11b (TAF11B) from Arabidopsis thaliana (Mouse-ear cress).